The primary structure comprises 645 residues: Rab11 family-interacting protein 5 (645 aa).

Residues 1–146 form the C2 domain; the sequence is MALVRDPEPA…AGRAQHTQWY (146 aa). Serine 176, serine 283, serine 286, serine 307, serine 357, and serine 367 each carry phosphoserine. Positions 271–299 are disordered; that stretch reads GAELLTRSPSHSSWLSTEGGRDSIQSPKL. Over residues 277-286 the composition is skewed to polar residues; that stretch reads RSPSHSSWLS. Residues 341-550 are disordered; it reads SHVYNEEPQP…STALSSGLER (210 aa). Over residues 357-374 the composition is skewed to low complexity; that stretch reads SISGPFPPSSSLHSVPPR. The span at 375–387 shows a compositional bias: basic and acidic residues; sequence SSEEGSRSSDDSW. Serine 391 and serine 395 each carry phosphoserine. The span at 452 to 463 shows a compositional bias: basic residues; that stretch reads RMGLFHHHHHQG. Serine 486, serine 530, serine 539, serine 545, and serine 640 each carry phosphoserine. Positions 578 to 640 constitute an FIP-RBD domain; that stretch reads KDSAVLDQSA…ETSPTLLQIS (63 aa).

In terms of assembly, interacts with RAB11FIP4. Interacts with NAPG. Interacts with RO60. Interacts with RAB11A that has been activated by GTP binding. Phosphorylated on serine and threonine residues. Phosphorylation at Ser-357 is PKA-dependent.

It is found in the cytoplasm. It localises to the recycling endosome membrane. The protein resides in the early endosome membrane. Its subcellular location is the golgi apparatus membrane. The protein localises to the cytoplasmic vesicle. It is found in the secretory vesicle membrane. It localises to the mitochondrion membrane. Functionally, rab effector involved in protein trafficking from apical recycling endosomes to the apical plasma membrane. Involved in insulin granule exocytosis. May regulate V-ATPase intracellular transport in response to extracellular acidosis. In Mus musculus (Mouse), this protein is Rab11 family-interacting protein 5.